Reading from the N-terminus, the 337-residue chain is ATP-dependent 6-phosphofructokinase (337 aa).

An ATP-binding site is contributed by Gly-11. An ADP-binding site is contributed by 21–25 (RAVVR). Residues 72 to 73 (RY) and 102 to 105 (GDGS) contribute to the ATP site. Residue Asp-103 participates in Mg(2+) binding. 125-127 (TID) serves as a coordination point for substrate. The active-site Proton acceptor is Asp-127. Arg-154 provides a ligand contact to ADP. Substrate contacts are provided by residues Arg-162 and 169 to 171 (MGR). Residues 185-187 (GAD) and 214-216 (KNH) contribute to the ADP site. Substrate contacts are provided by residues Glu-223, Arg-245, and 251–254 (HILR).

Belongs to the phosphofructokinase type A (PFKA) family. ATP-dependent PFK group I subfamily. Prokaryotic clade 'B1' sub-subfamily. Homotetramer. Mg(2+) is required as a cofactor.

The protein localises to the cytoplasm. It catalyses the reaction beta-D-fructose 6-phosphate + ATP = beta-D-fructose 1,6-bisphosphate + ADP + H(+). Its pathway is carbohydrate degradation; glycolysis; D-glyceraldehyde 3-phosphate and glycerone phosphate from D-glucose: step 3/4. Its activity is regulated as follows. Allosterically activated by ADP and other diphosphonucleosides, and allosterically inhibited by phosphoenolpyruvate. Catalyzes the phosphorylation of D-fructose 6-phosphate to fructose 1,6-bisphosphate by ATP, the first committing step of glycolysis. The protein is ATP-dependent 6-phosphofructokinase of Streptococcus mutans serotype c (strain ATCC 700610 / UA159).